The chain runs to 596 residues: Aspartate--tRNA(Asp/Asn) ligase (596 aa).

Glu175 contributes to the L-aspartate binding site. The interval 199–202 (QQYK) is aspartate. Positions 221 and 454 each coordinate L-aspartate. 221–223 (RDE) contributes to the ATP binding site. An ATP-binding site is contributed by Glu488. An L-aspartate-binding site is contributed by Arg495. 540 to 543 (GIDR) is a binding site for ATP.

The protein belongs to the class-II aminoacyl-tRNA synthetase family. Type 1 subfamily. In terms of assembly, homodimer.

Its subcellular location is the cytoplasm. It catalyses the reaction tRNA(Asx) + L-aspartate + ATP = L-aspartyl-tRNA(Asx) + AMP + diphosphate. In terms of biological role, aspartyl-tRNA synthetase with relaxed tRNA specificity since it is able to aspartylate not only its cognate tRNA(Asp) but also tRNA(Asn). Reaction proceeds in two steps: L-aspartate is first activated by ATP to form Asp-AMP and then transferred to the acceptor end of tRNA(Asp/Asn). The protein is Aspartate--tRNA(Asp/Asn) ligase of Rhizobium rhizogenes (strain K84 / ATCC BAA-868) (Agrobacterium radiobacter).